The sequence spans 224 residues: Ribose-5-phosphate isomerase A (224 aa).

Residues threonine 32 to threonine 35, aspartate 85 to aspartate 88, and lysine 98 to glycine 101 each bind substrate. Residue glutamate 107 is the Proton acceptor of the active site. Lysine 125 provides a ligand contact to substrate.

The protein belongs to the ribose 5-phosphate isomerase family. In terms of assembly, homodimer.

The catalysed reaction is aldehydo-D-ribose 5-phosphate = D-ribulose 5-phosphate. It functions in the pathway carbohydrate degradation; pentose phosphate pathway; D-ribose 5-phosphate from D-ribulose 5-phosphate (non-oxidative stage): step 1/1. Its function is as follows. Catalyzes the reversible conversion of ribose-5-phosphate to ribulose 5-phosphate. The sequence is that of Ribose-5-phosphate isomerase A from Pseudomonas putida (strain GB-1).